Reading from the N-terminus, the 144-residue chain is Large ribosomal subunit protein uL15 (144 aa).

The tract at residues 1–59 is disordered; the sequence is MELNNLKPAEGAKHAKRRVGRGIGSGLGKTAGRGHKGQKSRSGGFHKVGFEGGQMPLQR. Residues 21–31 show a composition bias toward gly residues; it reads RGIGSGLGKTA.

This sequence belongs to the universal ribosomal protein uL15 family. As to quaternary structure, part of the 50S ribosomal subunit.

Functionally, binds to the 23S rRNA. This chain is Large ribosomal subunit protein uL15, found in Burkholderia thailandensis (strain ATCC 700388 / DSM 13276 / CCUG 48851 / CIP 106301 / E264).